The following is a 295-amino-acid chain: Transmembrane protein 71 (295 aa).

A run of 2 helical transmembrane segments spans residues 229–249 (LLQEVFFQAILLAVCLIISAC) and 253–273 (FMGEILASVFTCSLMITVAYV).

It belongs to the TMEM71 family.

It is found in the membrane. The chain is Transmembrane protein 71 (TMEM71) from Homo sapiens (Human).